We begin with the raw amino-acid sequence, 156 residues long: uncharacterized protein (156 aa).

Helical transmembrane passes span 7–29 (AQIS…SYFL), 42–64 (YFAL…PYLF), 69–88 (AVTG…AITS), 98–120 (AAIW…YPAL), and 133–155 (ALVL…ISRI).

It is found in the cell membrane. This is an uncharacterized protein from Pasteurella multocida (strain Pm70).